A 486-amino-acid chain; its full sequence is Achaete-scute complex protein T8 (486 aa).

Disordered stretches follow at residues 1 to 26 (MAAL…GIKT) and 75 to 158 (AAST…LPLP). The span at 75–86 (AASTTNTTPISS) shows a compositional bias: polar residues. The 65-residue stretch at 159–223 (QAVARRNARE…RMAVEYIRSL (65 aa)) folds into the bHLH domain.

In terms of assembly, efficient DNA binding requires dimerization with another bHLH protein. As to expression, l(1)SC, SC and AC strongly label the presumptive stomatogastric nervous system, while ASE is more prominent in the presumptive procephalic lobe.

Its function is as follows. Involved in the determination of the neuronal precursors of optic lobes in the central nervous system. The polypeptide is Achaete-scute complex protein T8 (ase) (Drosophila melanogaster (Fruit fly)).